The chain runs to 207 residues: MNINAPPKRIGIMGGTFDPLHYGHLVAAEMARHEFALEKVIFIPTGNPPHKVGRRVTSSGDRYEMVKRAVQDNSFFEVSDLEIQRKGYSYTVDTLKDMHKLYPQHELYFITGADAFREIFTWREVQSVLSLSHFIGASRPGFDPHEFLEELKRDYPEFLPHMHLFDVPALAISSTDIRSRVKEGKPIRYLLPESVRLYIEETGLYRI.

Belongs to the NadD family.

The enzyme catalyses nicotinate beta-D-ribonucleotide + ATP + H(+) = deamido-NAD(+) + diphosphate. Its pathway is cofactor biosynthesis; NAD(+) biosynthesis; deamido-NAD(+) from nicotinate D-ribonucleotide: step 1/1. Catalyzes the reversible adenylation of nicotinate mononucleotide (NaMN) to nicotinic acid adenine dinucleotide (NaAD). This chain is Probable nicotinate-nucleotide adenylyltransferase, found in Desulfitobacterium hafniense (strain DSM 10664 / DCB-2).